Reading from the N-terminus, the 294-residue chain is Eukaryotic translation initiation factor 3 subunit G (294 aa).

Residues 1 to 22 (MQTFHHQDTGSEDFRQNTMDEK) show a composition bias toward basic and acidic residues. Disordered stretches follow at residues 1–42 (MQTF…DGTK) and 164–211 (GGMG…SDDD). Over residues 30–42 (STPQITQNADGTK) the composition is skewed to polar residues. The segment covering 193-205 (GPGGPGGPGGAAG) has biased composition (gly residues). Residues 214–292 (LTLRVTNLSE…LIMKVDYSKK (79 aa)) enclose the RRM domain.

This sequence belongs to the eIF-3 subunit G family. In terms of assembly, component of the eukaryotic translation initiation factor 3 (eIF-3) complex.

The protein resides in the cytoplasm. Functionally, RNA-binding component of the eukaryotic translation initiation factor 3 (eIF-3) complex, which is involved in protein synthesis of a specialized repertoire of mRNAs and, together with other initiation factors, stimulates binding of mRNA and methionyl-tRNAi to the 40S ribosome. The eIF-3 complex specifically targets and initiates translation of a subset of mRNAs involved in cell proliferation. This subunit can bind 18S rRNA. This Yarrowia lipolytica (strain CLIB 122 / E 150) (Yeast) protein is Eukaryotic translation initiation factor 3 subunit G.